The sequence spans 172 residues: uncharacterized protein (172 aa).

An N-terminal signal peptide occupies residues 1 to 29 (MKKKQVMLALTAAAGLGLTALHSAPAAKA). SH3b domains lie at 42 to 105 (SDTY…MKTA) and 112 to 172 (KQTA…LQMR).

This is an uncharacterized protein from Bacillus subtilis (strain 168).